Reading from the N-terminus, the 344-residue chain is Biotin synthase (344 aa).

The Radical SAM core domain occupies 65–290 (PEVEVEGIIS…RTMLRFAGGR (226 aa)). Residues cysteine 80, cysteine 84, and cysteine 87 each coordinate [4Fe-4S] cluster. [2Fe-2S] cluster contacts are provided by cysteine 123, cysteine 156, cysteine 215, and arginine 285.

Belongs to the radical SAM superfamily. Biotin synthase family. Homodimer. [4Fe-4S] cluster serves as cofactor. The cofactor is [2Fe-2S] cluster.

It catalyses the reaction (4R,5S)-dethiobiotin + (sulfur carrier)-SH + 2 reduced [2Fe-2S]-[ferredoxin] + 2 S-adenosyl-L-methionine = (sulfur carrier)-H + biotin + 2 5'-deoxyadenosine + 2 L-methionine + 2 oxidized [2Fe-2S]-[ferredoxin]. It participates in cofactor biosynthesis; biotin biosynthesis; biotin from 7,8-diaminononanoate: step 2/2. In terms of biological role, catalyzes the conversion of dethiobiotin (DTB) to biotin by the insertion of a sulfur atom into dethiobiotin via a radical-based mechanism. This is Biotin synthase from Mycolicibacterium paratuberculosis (strain ATCC BAA-968 / K-10) (Mycobacterium paratuberculosis).